Reading from the N-terminus, the 95-residue chain is Aspartyl/glutamyl-tRNA(Asn/Gln) amidotransferase subunit C (95 aa).

Belongs to the GatC family. In terms of assembly, heterotrimer of A, B and C subunits.

The enzyme catalyses L-glutamyl-tRNA(Gln) + L-glutamine + ATP + H2O = L-glutaminyl-tRNA(Gln) + L-glutamate + ADP + phosphate + H(+). The catalysed reaction is L-aspartyl-tRNA(Asn) + L-glutamine + ATP + H2O = L-asparaginyl-tRNA(Asn) + L-glutamate + ADP + phosphate + 2 H(+). Its function is as follows. Allows the formation of correctly charged Asn-tRNA(Asn) or Gln-tRNA(Gln) through the transamidation of misacylated Asp-tRNA(Asn) or Glu-tRNA(Gln) in organisms which lack either or both of asparaginyl-tRNA or glutaminyl-tRNA synthetases. The reaction takes place in the presence of glutamine and ATP through an activated phospho-Asp-tRNA(Asn) or phospho-Glu-tRNA(Gln). The polypeptide is Aspartyl/glutamyl-tRNA(Asn/Gln) amidotransferase subunit C (Vesicomyosocius okutanii subsp. Calyptogena okutanii (strain HA)).